A 634-amino-acid polypeptide reads, in one-letter code: Poly(ribitol-phosphate) beta-glucosyltransferase (634 aa).

Belongs to the glycosyltransferase 2 family.

The enzyme catalyses 4-O-[(D-ribitylphospho)(n)-D-ribitylphospho-(2R)-glycerylphospho]-N-acetyl-beta-D-mannosaminyl-(1-&gt;4)-N-acetyl-alpha-D-glucosaminyl di-trans,octa-cis-undecaprenyl diphosphate + n UDP-alpha-D-glucose = 4-O-[(2-beta-D-glucosyl-D-ribitylphospho)(n)-D-ribitylphospho-(2R)-glycerylphospho]-N-acetyl-beta-D-mannosaminyl-(1-&gt;4)-N-acetyl-alpha-D-glucosaminyl di-trans,octa-cis-undecaprenyl diphosphate + n UDP + n H(+). The protein operates within cell wall biogenesis; poly(ribitol phosphate) teichoic acid biosynthesis. Functionally, attaches glucose residues to poly(RboP)-wall teichoic acids (WTAs). This Bacillus spizizenii (strain ATCC 23059 / NRRL B-14472 / W23) (Bacillus subtilis subsp. spizizenii) protein is Poly(ribitol-phosphate) beta-glucosyltransferase.